We begin with the raw amino-acid sequence, 484 residues long: Glutamate--tRNA ligase (484 aa).

Residues 12–22 carry the 'HIGH' region motif; the sequence is PSPTGEPHVGT. The 'KMSKS' region signature appears at 253-257; it reads KLSKR. Residue lysine 256 participates in ATP binding.

Belongs to the class-I aminoacyl-tRNA synthetase family. Glutamate--tRNA ligase type 1 subfamily. In terms of assembly, monomer.

Its subcellular location is the cytoplasm. The enzyme catalyses tRNA(Glu) + L-glutamate + ATP = L-glutamyl-tRNA(Glu) + AMP + diphosphate. Its function is as follows. Catalyzes the attachment of glutamate to tRNA(Glu) in a two-step reaction: glutamate is first activated by ATP to form Glu-AMP and then transferred to the acceptor end of tRNA(Glu). The chain is Glutamate--tRNA ligase from Rhizobium leguminosarum bv. trifolii (strain WSM2304).